The following is a 219-amino-acid chain: Ribosomal RNA large subunit methyltransferase E (219 aa).

S-adenosyl-L-methionine is bound by residues glycine 60, tryptophan 62, aspartate 80, aspartate 96, and aspartate 120. Lysine 160 acts as the Proton acceptor in catalysis.

This sequence belongs to the class I-like SAM-binding methyltransferase superfamily. RNA methyltransferase RlmE family.

It localises to the cytoplasm. The catalysed reaction is uridine(2552) in 23S rRNA + S-adenosyl-L-methionine = 2'-O-methyluridine(2552) in 23S rRNA + S-adenosyl-L-homocysteine + H(+). Specifically methylates the uridine in position 2552 of 23S rRNA at the 2'-O position of the ribose in the fully assembled 50S ribosomal subunit. The chain is Ribosomal RNA large subunit methyltransferase E from Acidithiobacillus ferrooxidans (strain ATCC 23270 / DSM 14882 / CIP 104768 / NCIMB 8455) (Ferrobacillus ferrooxidans (strain ATCC 23270)).